We begin with the raw amino-acid sequence, 358 residues long: Phenylalanine--tRNA ligase alpha subunit (358 aa).

Glu258 provides a ligand contact to Mg(2+).

Belongs to the class-II aminoacyl-tRNA synthetase family. Phe-tRNA synthetase alpha subunit type 1 subfamily. Tetramer of two alpha and two beta subunits. Mg(2+) serves as cofactor.

It localises to the cytoplasm. It catalyses the reaction tRNA(Phe) + L-phenylalanine + ATP = L-phenylalanyl-tRNA(Phe) + AMP + diphosphate + H(+). The chain is Phenylalanine--tRNA ligase alpha subunit from Rhodospirillum rubrum (strain ATCC 11170 / ATH 1.1.1 / DSM 467 / LMG 4362 / NCIMB 8255 / S1).